The chain runs to 410 residues: Arginine deiminase (410 aa).

Cys-400 acts as the Amidino-cysteine intermediate in catalysis.

This sequence belongs to the arginine deiminase family.

The protein localises to the cytoplasm. It carries out the reaction L-arginine + H2O = L-citrulline + NH4(+). It participates in amino-acid degradation; L-arginine degradation via ADI pathway; carbamoyl phosphate from L-arginine: step 1/2. This chain is Arginine deiminase, found in Bacillus cytotoxicus (strain DSM 22905 / CIP 110041 / 391-98 / NVH 391-98).